The chain runs to 496 residues: Galactose/methyl galactoside import ATP-binding protein MglA (496 aa).

ABC transporter domains follow at residues 5 to 240 (LTIR…VGRT) and 243 to 496 (KRFP…ARYL). Position 37–44 (37–44 (GENGAGKS)) interacts with ATP.

This sequence belongs to the ABC transporter superfamily. Galactose/methyl galactoside importer (TC 3.A.1.2.3) family. As to quaternary structure, the complex is composed of one ATP-binding protein (MglA), two transmembrane proteins (MglC) and a solute-binding protein (MglB).

The protein localises to the cell inner membrane. The catalysed reaction is D-galactose(out) + ATP + H2O = D-galactose(in) + ADP + phosphate + H(+). The enzyme catalyses methyl beta-D-galactoside(out) + ATP + H2O = methyl beta-D-galactoside(in) + ADP + phosphate + H(+). Functionally, part of the ABC transporter complex MglABC involved in galactose/methyl galactoside import. Responsible for energy coupling to the transport system. The protein is Galactose/methyl galactoside import ATP-binding protein MglA of Treponema pallidum (strain Nichols).